A 77-amino-acid polypeptide reads, in one-letter code: Conotoxin Bt6.6 (77 aa).

A signal peptide spans 1-19; sequence MEKLTILLLVAAVLMSTQA. Residues 20–38 constitute a propeptide that is removed on maturation; that stretch reads LIQSDGEKRQQAKINFLSX. 3 cysteine pairs are disulfide-bonded: cysteine 51–cysteine 65, cysteine 58–cysteine 69, and cysteine 64–cysteine 74.

The protein belongs to the conotoxin O2 superfamily. As to expression, expressed by the venom duct.

It is found in the secreted. The protein is Conotoxin Bt6.6 of Conus betulinus (Beech cone).